A 326-amino-acid chain; its full sequence is NAD kinase (326 aa).

The active-site Proton acceptor is the D93. Residues D93–G94, R98, N171–E172, R182, D201, and T212–S217 contribute to the NAD(+) site.

The protein belongs to the NAD kinase family. A divalent metal cation is required as a cofactor.

The protein localises to the cytoplasm. It carries out the reaction NAD(+) + ATP = ADP + NADP(+) + H(+). Involved in the regulation of the intracellular balance of NAD and NADP, and is a key enzyme in the biosynthesis of NADP. Catalyzes specifically the phosphorylation on 2'-hydroxyl of the adenosine moiety of NAD to yield NADP. The polypeptide is NAD kinase (Thermobifida fusca (strain YX)).